The following is a 248-amino-acid chain: Triosephosphate isomerase (248 aa).

9 to 11 (NWK) provides a ligand contact to substrate. Histidine 92 acts as the Electrophile in catalysis. Catalysis depends on glutamate 164, which acts as the Proton acceptor. Substrate-binding positions include glycine 170, serine 209, and 230-231 (GG).

This sequence belongs to the triosephosphate isomerase family. In terms of assembly, homodimer.

It localises to the cytoplasm. It carries out the reaction D-glyceraldehyde 3-phosphate = dihydroxyacetone phosphate. It participates in carbohydrate biosynthesis; gluconeogenesis. It functions in the pathway carbohydrate degradation; glycolysis; D-glyceraldehyde 3-phosphate from glycerone phosphate: step 1/1. Functionally, involved in the gluconeogenesis. Catalyzes stereospecifically the conversion of dihydroxyacetone phosphate (DHAP) to D-glyceraldehyde-3-phosphate (G3P). The sequence is that of Triosephosphate isomerase from Thiobacillus denitrificans (strain ATCC 25259 / T1).